Reading from the N-terminus, the 302-residue chain is MATVANFLAKPISTVVPRPSSAVASTSSFVFFNHKTNPLFRRKNLPKRLFSAVKIKAGAASPGKVGTPPANDEKVQKIHSGEEFDVALKNAKSKLVVAEFATSKSDQSNKIYPFMVELSRTCNDVVFLLVMGDESDKTRELCRREKIEKVPHFSFYKSMEKIHEEEGIEPDQLMGDVLYYGDNHSAVVQLHGRPDVEKLIDENRTGGKLIVLDVGLKHCGPCVKVYPTVLKLSRSMSETVVFARMNGDENDSCMEFLKDMNVIEVPTFLFIRDGEIRGRYVGSGKGELIGEILRYSGVRVTY.

A chloroplast-targeting transit peptide spans 1 to 56 (MATVANFLAKPISTVVPRPSSAVASTSSFVFFNHKTNPLFRRKNLPKRLFSAVKIK). Positions 163-298 (HEEEGIEPDQ…IGEILRYSGV (136 aa)) constitute a Thioredoxin domain. Catalysis depends on nucleophile residues Cys219 and Cys222. Cys219 and Cys222 form a disulfide bridge.

This sequence belongs to the thioredoxin family. As to quaternary structure, interacts with the plastidial peroxiredoxin BAS1.

It is found in the plastid. The protein resides in the chloroplast stroma. Functionally, probable thiol-disulfide oxidoreductase involved in resistance to oxidative stress. May participate in the reduction of alkyl hydroperoxides derived from oxidative stress by acting as a physiological electron donor to the BAS1 peroxiredoxin. May regenerate methionine sulfoxide reductase B1 (MSRB1) activity through sulfenic acid reduction. In Arabidopsis thaliana (Mouse-ear cress), this protein is Thioredoxin-like protein CDSP32, chloroplastic (CDSP32).